The primary structure comprises 380 residues: Putative F-box/kelch-repeat protein At2g44030 (380 aa).

The region spanning 16–66 is the F-box domain; that stretch reads PKSFLSLPYDVVFNCLSRVSRTHDPILSLVSKSFRSLLALPDLEAERFRIL. Kelch repeat units follow at residues 123-170 and 172-219; these read EIYL…VIDG and INVY…ALIK.

The polypeptide is Putative F-box/kelch-repeat protein At2g44030 (Arabidopsis thaliana (Mouse-ear cress)).